The following is a 500-amino-acid chain: Prostacyclin synthase (500 aa).

The chain crosses the membrane as a helical span at residues 1 to 20 (MAWAALLGLLAALLLLLLLS). Substrate-binding positions include R106, L112, N287, 358–359 (TR), and R382. C441 provides a ligand contact to heme.

It belongs to the cytochrome P450 family. The cofactor is heme. As to expression, widely expressed; particularly abundant in ovary, heart, skeletal muscle, lung and prostate.

It localises to the endoplasmic reticulum membrane. The catalysed reaction is prostaglandin H2 = prostaglandin I2. It carries out the reaction a hydroperoxyeicosatetraenoate = an oxoeicosatetraenoate + H2O. It catalyses the reaction (15S)-hydroperoxy-(5Z,8Z,11Z,13E)-eicosatetraenoate = 15-oxo-(5Z,8Z,11Z,13E)-eicosatetraenoate + H2O. The enzyme catalyses (15S)-hydroperoxy-(5Z,8Z,11Z,13E)-eicosatetraenoate + AH2 = (15S)-hydroxy-(5Z,8Z,11Z,13E)-eicosatetraenoate + A + H2O. Its function is as follows. Catalyzes the biosynthesis and metabolism of eicosanoids. Catalyzes the isomerization of prostaglandin H2 to prostacyclin (= prostaglandin I2), a potent mediator of vasodilation and inhibitor of platelet aggregation. Additionally, displays dehydratase activity, toward hydroperoxyeicosatetraenoates (HPETEs), especially toward (15S)-hydroperoxy-(5Z,8Z,11Z,13E)-eicosatetraenoate (15(S)-HPETE). The polypeptide is Prostacyclin synthase (PTGIS) (Homo sapiens (Human)).